A 349-amino-acid chain; its full sequence is Transcription elongation factor A protein 3 (349 aa).

Residues 5 to 82 (EELLRIAKKL…RNWKQLLDSP (78 aa)) enclose the TFIIS N-terminal domain. The interval 80–170 (DSPATPKGEK…RTPSSPSSPT (91 aa)) is disordered. Positions 101-110 (KGLDCSDWKP) are enriched in basic and acidic residues. Serine 115 is subject to Phosphoserine. Over residues 121–133 (RVEEPKDRRDSVD) the composition is skewed to basic and acidic residues. 2 stretches are compositionally biased toward low complexity: residues 134-144 (SKSSATSSPKR) and 160-170 (PRTPSSPSSPT). Serine 141 is modified (phosphoserine). A TFIIS central domain is found at 188–304 (VRDKCVEMLS…EHQMAKTGGT (117 aa)). Residues 307–347 (DLFQCSKCKKKNCTYNQVQTRSADEPMTTFVLCNECGNRWK) form a TFIIS-type zinc finger. 4 residues coordinate Zn(2+): cysteine 311, cysteine 314, cysteine 339, and cysteine 342.

It belongs to the TFS-II family.

The protein resides in the nucleus. Necessary for efficient RNA polymerase II transcription elongation past template-encoded arresting sites. The arresting sites in DNA have the property of trapping a certain fraction of elongating RNA polymerases that pass through, resulting in locked ternary complexes. Cleavage of the nascent transcript by S-II allows the resumption of elongation from the new 3'-terminus. The sequence is that of Transcription elongation factor A protein 3 (TCEA3) from Bos taurus (Bovine).